The sequence spans 149 residues: Glycophorin-A (149 aa).

An N-terminal signal peptide occupies residues 1-19 (MYGKIIFVLLLSAIVSISA). Residues 20–90 (SSTTEVAMHT…QLVHRFSEPE (71 aa)) are Extracellular-facing. O-linked (GalNAc...) serine glycosylation is present at Ser-21. Thr-22, Thr-23, and Thr-29 each carry an O-linked (GalNAc...) threonine glycan. O-linked (GalNAc...) serine glycosylation occurs at Ser-30. Thr-31 is a glycosylation site (O-linked (GalNAc...) threonine). Ser-32 carries O-linked (GalNAc...) serine glycosylation. A glycan (O-linked (GalNAc...) threonine) is linked at Thr-35. Residues Ser-37 and Ser-40 are each glycosylated (O-linked (GalNAc...) serine). O-linked (GalNAc...) threonine glycosylation is present at Thr-43. An O-linked (GalNAc...) serine glycan is attached at Ser-44. O-linked (GalNAc...) threonine glycans are attached at residues Thr-51 and Thr-55. A glycan (O-linked (GalNAc...) serine) is linked at Ser-62. O-linked (GalNAc...) threonine glycosylation is present at Thr-68. The helical transmembrane segment at 91 to 113 (ITLIIFGVMAGVIGTILLIYYSI) threads the bilayer. Residues 114 to 149 (RRLIKKSPSDVKPLPSPDTDVPLSSVEIENPETSDQ) lie on the Cytoplasmic side of the membrane. Positions 122 to 149 (SDVKPLPSPDTDVPLSSVEIENPETSDQ) are disordered. A phosphoserine mark is found at Ser-137 and Ser-147.

This sequence belongs to the glycophorin-A family. Homodimer. Component of the ankyrin-1 complex in the erythrocyte, composed of ANK1, RHCE, RHAG, SLC4A1, EPB42, GYPA, GYPB and AQP1. Interacts with SLC4A1; a GYPA monomer is bound at each end of the SLC4A1 dimer forming a heterotetramer.

The protein localises to the cell membrane. In terms of biological role, component of the ankyrin-1 complex, a multiprotein complex involved in the stability and shape of the erythrocyte membrane. Glycophorin A is the major intrinsic membrane protein of the erythrocyte. The N-terminal glycosylated segment, which lies outside the erythrocyte membrane, has MN blood group receptors. Appears to be important for the function of SLC4A1 and is required for high activity of SLC4A1. May be involved in translocation of SLC4A1 to the plasma membrane. The sequence is that of Glycophorin-A from Pan troglodytes (Chimpanzee).